The primary structure comprises 281 residues: Cytochrome c oxidase subunit 3 (281 aa).

Transmembrane regions (helical) follow at residues 34–54 (PWPIAVSFSLLVVTLSGVMTF), 59–79 (NGLFLLTLGFISLVSTMTLWF), 103–123 (GFVLFVVSEVFFFISIFWAFF), 148–168 (WEVPLLNTVILLSSGATVTYA), 179–199 (VIYGLIATIVLATVFTGFQGF), 220–240 (ATGFHGIHVLVGTIFLTVGLF), and 259–279 (ILYWHFVDVVWLFLFISVYWW).

Belongs to the cytochrome c oxidase subunit 3 family. Component of the cytochrome c oxidase (complex IV, CIV), a multisubunit enzyme composed of a catalytic core of 3 subunits and several supernumerary subunits. The complex exists as a monomer or a dimer and forms supercomplexes (SCs) in the inner mitochondrial membrane with ubiquinol-cytochrome c oxidoreductase (cytochrome b-c1 complex, complex III, CIII).

The protein resides in the mitochondrion inner membrane. The enzyme catalyses 4 Fe(II)-[cytochrome c] + O2 + 8 H(+)(in) = 4 Fe(III)-[cytochrome c] + 2 H2O + 4 H(+)(out). In terms of biological role, component of the cytochrome c oxidase, the last enzyme in the mitochondrial electron transport chain which drives oxidative phosphorylation. The respiratory chain contains 3 multisubunit complexes succinate dehydrogenase (complex II, CII), ubiquinol-cytochrome c oxidoreductase (cytochrome b-c1 complex, complex III, CIII) and cytochrome c oxidase (complex IV, CIV), that cooperate to transfer electrons derived from NADH and succinate to molecular oxygen, creating an electrochemical gradient over the inner membrane that drives transmembrane transport and the ATP synthase. Cytochrome c oxidase is the component of the respiratory chain that catalyzes the reduction of oxygen to water. Electrons originating from reduced cytochrome c in the intermembrane space (IMS) are transferred via the dinuclear copper A center (CU(A)) of subunit 2 and heme A of subunit 1 to the active site in subunit 1, a binuclear center (BNC) formed by heme A3 and copper B (CU(B)). The BNC reduces molecular oxygen to 2 water molecules using 4 electrons from cytochrome c in the IMS and 4 protons from the mitochondrial matrix. In Rhizopus stolonifer (Rhizopus nigricans), this protein is Cytochrome c oxidase subunit 3 (COX3).